The sequence spans 181 residues: Oligoribonuclease (181 aa).

The Exonuclease domain maps to 8 to 171; that stretch reads LIWIDLEMTG…QDIQESIAEL (164 aa). Tyr-129 is an active-site residue.

Belongs to the oligoribonuclease family.

It localises to the cytoplasm. 3'-to-5' exoribonuclease specific for small oligoribonucleotides. The protein is Oligoribonuclease of Shewanella putrefaciens (strain CN-32 / ATCC BAA-453).